A 419-amino-acid polypeptide reads, in one-letter code: rRNA methyltransferase 3, mitochondrial (419 aa).

Residues 1–39 (MAALCGGMLRGCILKPLGLSGSLQLKRNVRALRRTPVRV) constitute a mitochondrion transit peptide. The tract at residues 42 to 68 (ADEEGRERKQVEASRQRQPRQNESQAC) is disordered. Over residues 44–56 (EEGRERKQVEASR) the composition is skewed to basic and acidic residues. S-adenosyl-L-methionine-binding residues include Gly357, Ile381, and Leu390.

This sequence belongs to the class IV-like SAM-binding methyltransferase superfamily. RNA methyltransferase TrmH family.

The protein localises to the mitochondrion. The enzyme catalyses a uridine in rRNA + S-adenosyl-L-methionine = a 2'-O-methyluridine in rRNA + S-adenosyl-L-homocysteine + H(+). S-adenosyl-L-methionine-dependent 2'-O-ribose methyltransferase that catalyzes the formation of 2'-O-methylguanosine at position 1370 (Gm1370) in the mitochondrial large subunit ribosomal RNA (mtLSU rRNA), a conserved modification in the peptidyl transferase domain of the mtLSU rRNA. Also required for formation of 2'-O-methyluridine at position 1369 (Um1369) mediated by MRM2. This is rRNA methyltransferase 3, mitochondrial from Xenopus laevis (African clawed frog).